The sequence spans 556 residues: MSEADARPSNFIRQIIDKDLADGKHTSVHTRFPPEPNGYLHIGHAKSICLNFGIAQDYQGQCNLRFDDTNPEKEDIEYVESIKKDVNWLGFEWDGEVCYSSNYFDKLYEYAIELINKGLAYVDELSPEQIREYRGTLTAPGKPSPYRDRPIEENLALFEKMRAGEFEEGKACLRAKIDMGSSFMVMRDPVIYRVRFATHHQTGDKWCIYPMYDFTHCISDALEGITHSICTLEFMDNRRLYDWVLDNITIDCRPHQYEFSRLNLEYTVMSKRKLNQLVTEKLVDGWDDPRMPTVSGLRRRGFTSASIREFCKRIGVTKQENMIEFGSLESCIRDDLNENAPRAMAVLDPVKIVIENFEEGAVETLTVANHPNKPEMGEREVPFTREVWIEREDFREEANKKYKRLVLGKEVRLRGAYVIKAERIEKDAEGNITTIFCTYDAETLGKNPADGRKVKGVIHWVSADKALPAEIRLYDRLFTVPNPAAADDFAATINPESLVILNGFVEPSLAASEAEKGYQFERMGYFCADSKDSSADNLVFNRTVGLRDTWAKIENQ.

Positions 34–44 (PEPNGYLHIGH) match the 'HIGH' region motif. ATP is bound by residues 35-37 (EPN) and 41-47 (HIGHAKS). Positions 67 and 212 each coordinate L-glutamine. ATP contacts are provided by residues Thr231, 261-262 (RL), and 269-271 (MSK). The 'KMSKS' region motif lies at 268 to 272 (VMSKR).

It belongs to the class-I aminoacyl-tRNA synthetase family. As to quaternary structure, monomer.

The protein resides in the cytoplasm. The catalysed reaction is tRNA(Gln) + L-glutamine + ATP = L-glutaminyl-tRNA(Gln) + AMP + diphosphate. This is Glutamine--tRNA ligase from Vibrio campbellii (strain ATCC BAA-1116).